We begin with the raw amino-acid sequence, 100 residues long: Large ribosomal subunit protein uL23 (100 aa).

This sequence belongs to the universal ribosomal protein uL23 family. As to quaternary structure, part of the 50S ribosomal subunit. Contacts protein L29, and trigger factor when it is bound to the ribosome.

One of the early assembly proteins it binds 23S rRNA. One of the proteins that surrounds the polypeptide exit tunnel on the outside of the ribosome. Forms the main docking site for trigger factor binding to the ribosome. The sequence is that of Large ribosomal subunit protein uL23 from Vibrio atlanticus (strain LGP32) (Vibrio splendidus (strain Mel32)).